The sequence spans 471 residues: Protoheme IX farnesyltransferase, mitochondrial (471 aa).

The N-terminal 60 residues, 1–60 (MLLSNVAVNRTVVHTQLVSGSRSALHALSRTSHSVPVTHTHQRRHIFSHKRRLSSSTLAI), are a transit peptide targeting the mitochondrion. 6 helical membrane passes run 188–208 (AVSL…SGSA), 247–267 (ITGT…VAIL), 287–307 (IINT…GWAA), 312–332 (LLHP…FPHF), 368–388 (LLMF…WWFV), and 430–450 (KLFW…MIHK).

Belongs to the UbiA prenyltransferase family.

It is found in the mitochondrion membrane. The enzyme catalyses heme b + (2E,6E)-farnesyl diphosphate + H2O = Fe(II)-heme o + diphosphate. Functionally, converts protoheme IX and farnesyl diphosphate to heme O. The protein is Protoheme IX farnesyltransferase, mitochondrial (COX10) of Yarrowia lipolytica (strain CLIB 122 / E 150) (Yeast).